The chain runs to 145 residues: 3-hydroxyacyl-[acyl-carrier-protein] dehydratase FabZ (145 aa).

The active site involves H47.

Belongs to the thioester dehydratase family. FabZ subfamily.

The protein resides in the cytoplasm. The catalysed reaction is a (3R)-hydroxyacyl-[ACP] = a (2E)-enoyl-[ACP] + H2O. Involved in unsaturated fatty acids biosynthesis. Catalyzes the dehydration of short chain beta-hydroxyacyl-ACPs and long chain saturated and unsaturated beta-hydroxyacyl-ACPs. This Vesicomyosocius okutanii subsp. Calyptogena okutanii (strain HA) protein is 3-hydroxyacyl-[acyl-carrier-protein] dehydratase FabZ.